A 520-amino-acid chain; its full sequence is Glutamate--cysteine ligase (520 aa).

Belongs to the glutamate--cysteine ligase type 1 family. Type 1 subfamily.

It catalyses the reaction L-cysteine + L-glutamate + ATP = gamma-L-glutamyl-L-cysteine + ADP + phosphate + H(+). The protein operates within sulfur metabolism; glutathione biosynthesis; glutathione from L-cysteine and L-glutamate: step 1/2. This Sodalis glossinidius (strain morsitans) protein is Glutamate--cysteine ligase.